The chain runs to 41 residues: Antifungal peptide 2 (41 aa).

The residue at position 1 (Q1) is a Pyrrolidone carboxylic acid. Intrachain disulfides connect C3/C17, C7/C37, C11/C23, C16/C30, and C35/C39. The 38-residue stretch at 4-41 folds into the Chitin-binding type-1 domain; the sequence is ASRCPRPCNAGLCCSIYGYCGSGAAYCGAGNCRCQCRG.

Monomer.

Functionally, has antifungal activity against P.infestans, A.lycopersici, V.dahliae, G.zeae, A.nicotianae, F.moniliforme, F.oxysporum and C.gossypii. The protein is Antifungal peptide 2 of Eucommia ulmoides (Hardy rubber tree).